Here is a 441-residue protein sequence, read N- to C-terminus: Arginine biosynthesis bifunctional protein ArgJ, mitochondrial (441 aa).

Residues Thr177, Lys203, Thr214, Glu303, Asn436, and Ser441 each coordinate substrate. Catalysis depends on Thr214, which acts as the Nucleophile.

It belongs to the ArgJ family. As to quaternary structure, heterodimer of an alpha and a beta chain. The alpha and beta chains are autoproteolytically processed from a single precursor protein within the mitochondrion.

Its subcellular location is the mitochondrion matrix. It carries out the reaction N(2)-acetyl-L-ornithine + L-glutamate = N-acetyl-L-glutamate + L-ornithine. The enzyme catalyses L-glutamate + acetyl-CoA = N-acetyl-L-glutamate + CoA + H(+). It participates in amino-acid biosynthesis; L-arginine biosynthesis; L-ornithine and N-acetyl-L-glutamate from L-glutamate and N(2)-acetyl-L-ornithine (cyclic): step 1/1. It functions in the pathway amino-acid biosynthesis; L-arginine biosynthesis; N(2)-acetyl-L-ornithine from L-glutamate: step 1/4. Catalyzes two activities which are involved in the cyclic version of arginine biosynthesis: the synthesis of acetylglutamate from glutamate and acetyl-CoA, and of ornithine by transacetylation between acetylornithine and glutamate. The polypeptide is Arginine biosynthesis bifunctional protein ArgJ, mitochondrial (Debaryomyces hansenii (strain ATCC 36239 / CBS 767 / BCRC 21394 / JCM 1990 / NBRC 0083 / IGC 2968) (Yeast)).